The primary structure comprises 141 residues: Putative pre-16S rRNA nuclease (141 aa).

Belongs to the YqgF nuclease family.

The protein localises to the cytoplasm. Functionally, could be a nuclease involved in processing of the 5'-end of pre-16S rRNA. This Desulforudis audaxviator (strain MP104C) protein is Putative pre-16S rRNA nuclease.